A 325-amino-acid chain; its full sequence is MARPVSDRTPAPLLLGGPAGTPPGGGALLGLRSLLQGTSKPKEPASCLLKEKERKAALPAATTPGPGLETAGPADAPAGAVVGGGSPRGRPGPVPAPGLLAPLLWERTLPFGDVEYVDLDAFLLEHGLPPSPPPPGGPSPEPSPARTPAPSPGPGSCGSASPRSSPGHAPARAALGTASGHRAGLTSRDTPSPVDPDTVEVLMTFEPDPADLALSSIPGHETFDPRRHRFSEEELKPQPIMKKARKIQVPEEQKDEKYWSRRYKNNEAAKRSRDARRLKENQISVRAAFLEKENALLRQEVVAVRQELSHYRAVLSRYQAQHGAL.

3 disordered regions span residues 1–99 (MARP…APGL), 127–200 (GLPP…DTVE), and 229–255 (RFSE…EQKD). A compositionally biased stretch (gly residues) spans 17–28 (GPAGTPPGGGAL). 2 stretches are compositionally biased toward low complexity: residues 29–38 (LGLRSLLQGT) and 57–80 (ALPA…PAGA). Residue Ser86 is modified to Phosphoserine. The span at 129–153 (PPSPPPPGGPSPEPSPARTPAPSPG) shows a compositional bias: pro residues. A compositionally biased stretch (low complexity) spans 157-167 (CGSASPRSSPG). The bZIP domain occupies 255-318 (DEKYWSRRYK…SHYRAVLSRY (64 aa)). The segment at 257 to 279 (KYWSRRYKNNEAAKRSRDARRLK) is basic motif. The interval 283-297 (ISVRAAFLEKENALL) is leucine-zipper.

Belongs to the bZIP family. PAR subfamily. As to quaternary structure, binds DNA as a homodimer or a heterodimer. Can form a heterodimer with TEF. Ubiquitously expressed. Expressed in the suprachiasmatic nuclei (SCN) and in most peripheral tissues, with a strong circadian rhythmicity.

The protein resides in the nucleus. Functionally, this transcriptional activator recognizes and binds to the sequence 5'-RTTAYGTAAY-3' found in the promoter of genes such as albumin, CYP2A4 and CYP2A5. It is not essential for circadian rhythm generation, but modulates important clock output genes. May be a direct target for regulation by the circadian pacemaker component clock. May affect circadian period and sleep regulation. This chain is D site-binding protein (DBP), found in Homo sapiens (Human).